The primary structure comprises 392 residues: Putative glutamate--cysteine ligase 2 (392 aa).

The interval 347–367 (AARKHGAAPEPGTRTRGDDGV) is disordered.

The protein belongs to the glutamate--cysteine ligase type 2 family. YbdK subfamily.

The enzyme catalyses L-cysteine + L-glutamate + ATP = gamma-L-glutamyl-L-cysteine + ADP + phosphate + H(+). Functionally, ATP-dependent carboxylate-amine ligase which exhibits weak glutamate--cysteine ligase activity. The chain is Putative glutamate--cysteine ligase 2 from Corynebacterium jeikeium (strain K411).